Consider the following 636-residue polypeptide: Threonine--tRNA ligase (636 aa).

Residues 1–63 enclose the TGS domain; the sequence is MPMITITLPD…EHDASLRIIT (63 aa). Residues 245-536 are catalytic; the sequence is DHRKIGKAQD…LIEHHAGAFP (292 aa). Residues Cys336, His387, and His513 each coordinate Zn(2+).

Belongs to the class-II aminoacyl-tRNA synthetase family. In terms of assembly, homodimer. It depends on Zn(2+) as a cofactor.

It localises to the cytoplasm. It carries out the reaction tRNA(Thr) + L-threonine + ATP = L-threonyl-tRNA(Thr) + AMP + diphosphate + H(+). In terms of biological role, catalyzes the attachment of threonine to tRNA(Thr) in a two-step reaction: L-threonine is first activated by ATP to form Thr-AMP and then transferred to the acceptor end of tRNA(Thr). Also edits incorrectly charged L-seryl-tRNA(Thr). The polypeptide is Threonine--tRNA ligase (Xanthomonas campestris pv. campestris (strain 8004)).